The sequence spans 119 residues: Holo-[acyl-carrier-protein] synthase (119 aa).

Residues D8 and E58 each coordinate Mg(2+).

Belongs to the P-Pant transferase superfamily. AcpS family. It depends on Mg(2+) as a cofactor.

It localises to the cytoplasm. The enzyme catalyses apo-[ACP] + CoA = holo-[ACP] + adenosine 3',5'-bisphosphate + H(+). Functionally, transfers the 4'-phosphopantetheine moiety from coenzyme A to a Ser of acyl-carrier-protein. The polypeptide is Holo-[acyl-carrier-protein] synthase (Bacillus cereus (strain ATCC 10987 / NRS 248)).